The primary structure comprises 295 residues: Ribosomal protein L11 methyltransferase (295 aa).

Thr146, Gly167, Asp189, and Asn231 together coordinate S-adenosyl-L-methionine.

It belongs to the methyltransferase superfamily. PrmA family.

Its subcellular location is the cytoplasm. The enzyme catalyses L-lysyl-[protein] + 3 S-adenosyl-L-methionine = N(6),N(6),N(6)-trimethyl-L-lysyl-[protein] + 3 S-adenosyl-L-homocysteine + 3 H(+). Methylates ribosomal protein L11. This is Ribosomal protein L11 methyltransferase from Vibrio vulnificus (strain YJ016).